Here is a 218-residue protein sequence, read N- to C-terminus: N-(5'-phosphoribosyl)anthranilate isomerase (218 aa).

This sequence belongs to the TrpF family.

It carries out the reaction N-(5-phospho-beta-D-ribosyl)anthranilate = 1-(2-carboxyphenylamino)-1-deoxy-D-ribulose 5-phosphate. The protein operates within amino-acid biosynthesis; L-tryptophan biosynthesis; L-tryptophan from chorismate: step 3/5. The protein is N-(5'-phosphoribosyl)anthranilate isomerase of Bordetella bronchiseptica (strain ATCC BAA-588 / NCTC 13252 / RB50) (Alcaligenes bronchisepticus).